A 673-amino-acid chain; its full sequence is uncharacterized protein (673 aa).

The N-terminal stretch at 1 to 24 (MKIHNIIKIIIVVCLEGFALTSFA) is a signal peptide. 6 helical membrane passes run 224-244 (NAIG…MVLN), 253-273 (IALF…LGPL), 410-430 (IILI…LYFI), 436-456 (CMIT…MMLF), 469-489 (VSLS…LLIT), and 562-582 (VVSI…FYYF). The segment at 624-673 (AQATQGKPPSSGDMPGDGGSKRSEGQKGDDSFISSGGNSSGDSLSSSGGK) is disordered. Residues 642-653 (GSKRSEGQKGDD) are compositionally biased toward basic and acidic residues. A compositionally biased stretch (low complexity) spans 654–673 (SFISSGGNSSGDSLSSSGGK).

The protein belongs to the TrbL/VirB6 family.

It localises to the cell membrane. This is an uncharacterized protein from Rickettsia bellii (strain RML369-C).